Reading from the N-terminus, the 721-residue chain is Catalase-peroxidase (721 aa).

A cross-link (tryptophyl-tyrosyl-methioninium (Trp-Tyr) (with M-249)) is located at residues 95 to 223 (WHSAGSYRLF…LGAVHMGLIY (129 aa)). Residue H96 is the Proton acceptor of the active site. A cross-link (tryptophyl-tyrosyl-methioninium (Tyr-Met) (with W-95)) is located at residues 223–249 (YVNPQGRDGKPDPLKSAHDVRVTFKRM). H264 serves as a coordination point for heme b.

Belongs to the peroxidase family. Peroxidase/catalase subfamily. Homodimer or homotetramer. The cofactor is heme b. In terms of processing, formation of the three residue Trp-Tyr-Met cross-link is important for the catalase, but not the peroxidase activity of the enzyme.

The catalysed reaction is H2O2 + AH2 = A + 2 H2O. It catalyses the reaction 2 H2O2 = O2 + 2 H2O. Bifunctional enzyme with both catalase and broad-spectrum peroxidase activity. The protein is Catalase-peroxidase of Parvibaculum lavamentivorans (strain DS-1 / DSM 13023 / NCIMB 13966).